We begin with the raw amino-acid sequence, 443 residues long: Protein Z-dependent protease inhibitor (443 aa).

Positions 1–23 are cleaved as a signal peptide; it reads MKVVPSLLLSVLLAQVWLVPGLA. The interval 24-66 is disordered; that stretch reads PSPQSPETPAPQNQTSRVVQAPREEEEDEQEASEEKAGDEEKA. An N-linked (GlcNAc...) asparagine glycan is attached at N36. At S56 the chain carries Phosphoserine. Residues 56-66 are compositionally biased toward basic and acidic residues; that stretch reads SEEKAGDEEKA. The heparin-binding stretch occupies residues 136–153; that stretch reads TKPGLLPSLFKGLRETLS. Residues N180 and N295 are each glycosylated (N-linked (GlcNAc...) asparagine).

This sequence belongs to the serpin family. Phosphorylated by FAM20C in the extracellular medium.

The protein localises to the secreted. Functionally, inhibits activity of the coagulation protease factor Xa in the presence of PROZ, calcium and phospholipids. Also inhibits factor XIa in the absence of cofactors. The chain is Protein Z-dependent protease inhibitor (SERPINA10) from Pongo abelii (Sumatran orangutan).